Consider the following 441-residue polypeptide: MNDLRNIPQVDKIIKNEAFSGLDTSLVTMLARQILDEVRAKILNENASFESEEIINLILDEYYKFNEASLQRVLNLTGVTIHTNLARSVIDKEILKRATPVITGYSNLEYNLKTGSRGNRYDYVGSLIARAFGFEDAIVVNNNASAVFLVLNTFAKGREVVVSRGELVEIGGSFRVPEVMANAGCILKEVGTTNKTRLNDYEEAISDETAMLVKVHRSNFDIVGFSEETTANELSELASRQNLIDYFDLGSGFYGNLPFNLDKNEPDLKNLKDVSLVSFSGDKLLGAVQCGIIVGKKELIAKLRKNQLLRMLRVDKVIISLLAESIKAYLNKEFELITTQKLLHKSVKELENLANFINKSLKTPLEIVRTQTFVGGGAMPNKKIPSVALAFGGDANLNELKFRQKKVIGRIENDKFMLDLRSLLDDDVETLIKIINETEEK.

Position 283 is an N6-(pyridoxal phosphate)lysine (K283).

The protein belongs to the SelA family. Requires pyridoxal 5'-phosphate as cofactor.

It is found in the cytoplasm. The enzyme catalyses L-seryl-tRNA(Sec) + selenophosphate + H(+) = L-selenocysteinyl-tRNA(Sec) + phosphate. Its pathway is aminoacyl-tRNA biosynthesis; selenocysteinyl-tRNA(Sec) biosynthesis; selenocysteinyl-tRNA(Sec) from L-seryl-tRNA(Sec) (bacterial route): step 1/1. In terms of biological role, converts seryl-tRNA(Sec) to selenocysteinyl-tRNA(Sec) required for selenoprotein biosynthesis. This chain is L-seryl-tRNA(Sec) selenium transferase, found in Campylobacter concisus (strain 13826).